A 218-amino-acid polypeptide reads, in one-letter code: Large ribosomal subunit protein uL1 (218 aa).

Belongs to the universal ribosomal protein uL1 family. Part of the 50S ribosomal subunit.

Probably involved in E site tRNA release. Binds directly to 23S rRNA. Its function is as follows. Protein L1 is also a translational repressor protein, it controls the translation of its operon by binding to its mRNA. The chain is Large ribosomal subunit protein uL1 from Saccharolobus solfataricus (strain ATCC 35092 / DSM 1617 / JCM 11322 / P2) (Sulfolobus solfataricus).